The chain runs to 325 residues: Tetraacyldisaccharide 4'-kinase (325 aa).

55-62 (TAGGNGKT) lines the ATP pocket.

This sequence belongs to the LpxK family.

It catalyses the reaction a lipid A disaccharide + ATP = a lipid IVA + ADP + H(+). It participates in glycolipid biosynthesis; lipid IV(A) biosynthesis; lipid IV(A) from (3R)-3-hydroxytetradecanoyl-[acyl-carrier-protein] and UDP-N-acetyl-alpha-D-glucosamine: step 6/6. Functionally, transfers the gamma-phosphate of ATP to the 4'-position of a tetraacyldisaccharide 1-phosphate intermediate (termed DS-1-P) to form tetraacyldisaccharide 1,4'-bis-phosphate (lipid IVA). In Salmonella heidelberg (strain SL476), this protein is Tetraacyldisaccharide 4'-kinase.